The sequence spans 275 residues: Probable endonuclease lcl3 (275 aa).

Positions 1–25 (MRWPPWASNTQASNNDHPTTTNNND) are disordered. Low complexity predominate over residues 14–25 (NNDHPTTTNNND). Residues 41-57 (LIPTLVLTTGILSAFTL) form a helical membrane-spanning segment. Residues 79 to 247 (RSILGKVTSV…KARGLGLWKG (169 aa)) form the TNase-like domain. The active site involves Arg-130. Asp-135 is a Ca(2+) binding site. Residues Glu-138 and Arg-178 contribute to the active site.

Belongs to the LCL3 family.

It is found in the mitochondrion. The protein localises to the membrane. This is Probable endonuclease lcl3 (lcl3) from Aspergillus niger (strain ATCC MYA-4892 / CBS 513.88 / FGSC A1513).